The following is a 364-amino-acid chain: sn-glycerol-3-phosphate import ATP-binding protein UgpC (364 aa).

One can recognise an ABC transporter domain in the interval 4–235 (VVLRNVRKTY…PATTFVASFI (232 aa)). ATP is bound at residue 37 to 44 (GPSGCGKS).

This sequence belongs to the ABC transporter superfamily. sn-glycerol-3-phosphate importer (TC 3.A.1.1.3) family. As to quaternary structure, the complex is composed of two ATP-binding proteins (UgpC), two transmembrane proteins (UgpA and UgpE) and a solute-binding protein (UgpB).

Its subcellular location is the cell inner membrane. It catalyses the reaction sn-glycerol 3-phosphate(out) + ATP + H2O = sn-glycerol 3-phosphate(in) + ADP + phosphate + H(+). Part of the ABC transporter complex UgpBAEC involved in sn-glycerol-3-phosphate (G3P) import. Responsible for energy coupling to the transport system. This is sn-glycerol-3-phosphate import ATP-binding protein UgpC from Rhodopseudomonas palustris (strain BisB5).